The following is a 362-amino-acid chain: Very-long-chain (3R)-3-hydroxyacyl-CoA dehydratase (362 aa).

Over 1–149 the chain is Cytoplasmic; the sequence is MADCSLRPHV…DPFKHLKKGY (149 aa). In terms of domain architecture, CS spans 5-94; it reads SLRPHVHWAQ…KESSWWERLT (90 aa). Positions 111–135 form a coiled coil; sequence LDESDAEMELKEKEEEKINKMKIES. The helical transmembrane segment at 150-170 threads the bilayer; sequence LIMYNLVQFLGFSWIFVNMTV. Over 171 to 189 the chain is Lumenal; it reads RLFILGKDSFYDTFHTIAD. A helical membrane pass occupies residues 190–210; the sequence is MMYFCQTLALMEILNSLIGLV. Residues 211–212 are Cytoplasmic-facing; it reads RS. A helical membrane pass occupies residues 213 to 233; the sequence is PLIPAVIQVFGRNFILFVVLG. Residues 234-242 lie on the Lumenal side of the membrane; the sequence is SLEEMQSKA. The helical transmembrane segment at 243–263 threads the bilayer; that stretch reads VVFFLFYFWSIIELFRYPYYM. The Cytoplasmic portion of the chain corresponds to 264–282; it reads LSCMGIEWKPLTWLRYTSW. Residues 283-303 traverse the membrane as a helical segment; it reads IPLYPLGGLAEAVCLIQSIPI. Catalysis depends on residues Tyr-286 and Glu-293. The Lumenal segment spans residues 304–319; the sequence is FSETGKFSLGLPNPLN. Residues 320-340 form a helical membrane-spanning segment; it reads VTIQFSFLLQMYLIALFLGLF. The Cytoplasmic portion of the chain corresponds to 341 to 362; that stretch reads VNFRYLYKQRKQHLGPKKRKMK.

Belongs to the very long-chain fatty acids dehydratase HACD family.

It localises to the endoplasmic reticulum membrane. It carries out the reaction a very-long-chain (3R)-3-hydroxyacyl-CoA = a very-long-chain (2E)-enoyl-CoA + H2O. It catalyses the reaction (3R)-hydroxyhexadecanoyl-CoA = (2E)-hexadecenoyl-CoA + H2O. Its pathway is lipid metabolism; fatty acid biosynthesis. In terms of biological role, catalyzes the third of the four reactions of the long-chain fatty acids elongation cycle. This endoplasmic reticulum-bound enzymatic process, allows the addition of two carbons to the chain of long- and very long-chain fatty acids/VLCFAs per cycle. This enzyme catalyzes the dehydration of the 3-hydroxyacyl-CoA intermediate into trans-2,3-enoyl-CoA, within each cycle of fatty acid elongation. Thereby, it participates in the production of VLCFAs of different chain lengths that are involved in multiple biological processes as precursors of membrane lipids and lipid mediators. Involved in Rac1-signaling pathways leading to the modulation of gene expression. The protein is Very-long-chain (3R)-3-hydroxyacyl-CoA dehydratase of Gallus gallus (Chicken).